Consider the following 205-residue polypeptide: Beta-crystallin B2 (205 aa).

Ala-2 bears the N-acetylalanine mark. Residues 2 to 16 (ASDHQSPATKQQQPS) form an N-terminal arm region. 2 Beta/gamma crystallin 'Greek key' domains span residues 17–56 (SKIV…LVHS) and 57–101 (GPWV…RPIK). A connecting peptide region spans residues 102 to 106 (VDSQE). Beta/gamma crystallin 'Greek key' domains are found at residues 107-148 (HKIV…RVQS) and 149-191 (GTWV…RRIR). The interval 193 to 205 (MQWHQRGTFHPTN) is C-terminal arm.

This sequence belongs to the beta/gamma-crystallin family. In terms of assembly, homo/heterodimer, or complexes of higher-order. The structure of beta-crystallin oligomers seems to be stabilized through interactions between the N-terminal arms. In terms of processing, the N-terminus is blocked.

Functionally, crystallins are the dominant structural components of the vertebrate eye lens. The chain is Beta-crystallin B2 from Aquarana catesbeiana (American bullfrog).